A 464-amino-acid chain; its full sequence is Agamous-like MADS-box protein AGL92 (464 aa).

The region spanning 1-60 is the MADS-box domain; that stretch reads MRTKTKLVLIPDRHFRRATFRKRNAGIRKKLHELTTLCDIKACAVIYSPFENPTVWPSTE. Residues 85–114 adopt a coiled-coil conformation; sequence ETFLRDQITKEQNKLESLRRENRETQLKHF. The disordered stretch occupies residues 443–464; it reads TSTGHMPSTTTTTTNNNNNNNV. Low complexity predominate over residues 451 to 464; it reads TTTTTTNNNNNNNV.

Interacts with AGL62.

It is found in the nucleus. Functionally, putative transcription factor. This Arabidopsis thaliana (Mouse-ear cress) protein is Agamous-like MADS-box protein AGL92 (AGL92).